A 136-amino-acid chain; its full sequence is Small ribosomal subunit protein uS8c (136 aa).

This sequence belongs to the universal ribosomal protein uS8 family. As to quaternary structure, part of the 30S ribosomal subunit.

Its subcellular location is the plastid. In terms of biological role, one of the primary rRNA binding proteins, it binds directly to 16S rRNA central domain where it helps coordinate assembly of the platform of the 30S subunit. The polypeptide is Small ribosomal subunit protein uS8c (rps8) (Helicosporidium sp. subsp. Simulium jonesii (Green alga)).